The primary structure comprises 308 residues: tRNA dimethylallyltransferase (308 aa).

14–21 lines the ATP pocket; sequence GPTASGKT. 16–21 is a binding site for substrate; it reads TASGKT. Interaction with substrate tRNA regions lie at residues 39–42, 163–167, and 244–249; these read DSAL, QRLSR, and RCVGYR.

It belongs to the IPP transferase family. In terms of assembly, monomer. Mg(2+) serves as cofactor.

The catalysed reaction is adenosine(37) in tRNA + dimethylallyl diphosphate = N(6)-dimethylallyladenosine(37) in tRNA + diphosphate. Catalyzes the transfer of a dimethylallyl group onto the adenine at position 37 in tRNAs that read codons beginning with uridine, leading to the formation of N6-(dimethylallyl)adenosine (i(6)A). The protein is tRNA dimethylallyltransferase of Shewanella baltica (strain OS223).